The following is a 261-amino-acid chain: Probable enoyl-CoA hydratase EchA17 (261 aa).

It belongs to the enoyl-CoA hydratase/isomerase family.

The enzyme catalyses a (3S)-3-hydroxyacyl-CoA = a (2E)-enoyl-CoA + H2O. The catalysed reaction is a 4-saturated-(3S)-3-hydroxyacyl-CoA = a (3E)-enoyl-CoA + H2O. Could possibly oxidize fatty acids using specific components. The chain is Probable enoyl-CoA hydratase EchA17 (echA17) from Mycobacterium bovis (strain BCG / Pasteur 1173P2).